A 395-amino-acid chain; its full sequence is 8-amino-7-oxononanoate synthase (395 aa).

108 to 109 (GF) is a pyridoxal 5'-phosphate binding site. H134 serves as a coordination point for substrate. Pyridoxal 5'-phosphate-binding positions include S184, 209-212 (DDAH), and 240-243 (TLSK). K243 carries the N6-(pyridoxal phosphate)lysine modification. Residue T357 coordinates substrate.

The protein belongs to the class-II pyridoxal-phosphate-dependent aminotransferase family. BioF subfamily. In terms of assembly, homodimer. Pyridoxal 5'-phosphate serves as cofactor.

The enzyme catalyses 6-carboxyhexanoyl-[ACP] + L-alanine + H(+) = (8S)-8-amino-7-oxononanoate + holo-[ACP] + CO2. It functions in the pathway cofactor biosynthesis; biotin biosynthesis. Catalyzes the decarboxylative condensation of pimeloyl-[acyl-carrier protein] and L-alanine to produce 8-amino-7-oxononanoate (AON), [acyl-carrier protein], and carbon dioxide. In Fervidobacterium nodosum (strain ATCC 35602 / DSM 5306 / Rt17-B1), this protein is 8-amino-7-oxononanoate synthase.